The following is a 413-amino-acid chain: MVLPNFKENLEKYAKLLVTNGINVQPGHTVALSIDVEQAELAHLLVKEAYALGAAEVIVQWSDDTINRERFLHAEMNRIEEVPAYKKAEMEYLLEKKASRLGVRSSDPDAFNGVAPERLSAHAKAIGAAFKPMQVATQSNKVSWTVAAAAGKEWAKKVFPNASSDEEAVDLLWNQIFKTCRVYEKDPVRAWKEHADRLDAKARILNEAQFSALHYTAPGTDLTLGLPKNHVWESAGAINAQGESFLPNMPTEEVFTAPDFRRAYGYVSSTKPLSYNGNIIEGIKVTFKDGEIVDITADQGEKVMKNLVFNNNGARALGECALVPDSSPISQSGITFFNTLFDENASNHLAIGAAYATSVEGGADMTEEELKAAGLNRSDVHVDFIIGSNQMNIDGIHHDGSRVPIFRNGDWVI.

Positions 253, 319, 343, 348, 381, and 383 each coordinate a divalent metal cation.

This sequence belongs to the peptidase M29 family. In terms of assembly, monomer. It depends on Co(2+) as a cofactor. Requires Zn(2+) as cofactor. Mg(2+) serves as cofactor.

Functionally, exhibits a high specificity towards peptides possessing arginine or aromatic amino acids at the N-terminus. Could be involved both in bacterial growth by supplying amino acids. This Streptococcus thermophilus protein is Aminopeptidase PepS (pepS).